The chain runs to 218 residues: Large ribosomal subunit protein uL3 (218 aa).

The protein belongs to the universal ribosomal protein uL3 family. As to quaternary structure, part of the 50S ribosomal subunit. Forms a cluster with proteins L14 and L19.

Functionally, one of the primary rRNA binding proteins, it binds directly near the 3'-end of the 23S rRNA, where it nucleates assembly of the 50S subunit. This Corynebacterium efficiens (strain DSM 44549 / YS-314 / AJ 12310 / JCM 11189 / NBRC 100395) protein is Large ribosomal subunit protein uL3.